The following is a 932-amino-acid chain: Isoleucine--tRNA ligase (932 aa).

Residues 59-69 carry the 'HIGH' region motif; the sequence is PYANGTIHIGH. Glu562 is a binding site for L-isoleucyl-5'-AMP. The 'KMSKS' region motif lies at 603–607; sequence KMSKS. Lys606 contacts ATP. Zn(2+) contacts are provided by Cys899, Cys902, Cys915, and Cys918.

Belongs to the class-I aminoacyl-tRNA synthetase family. IleS type 1 subfamily. Monomer. Requires Zn(2+) as cofactor.

It is found in the cytoplasm. It carries out the reaction tRNA(Ile) + L-isoleucine + ATP = L-isoleucyl-tRNA(Ile) + AMP + diphosphate. Functionally, catalyzes the attachment of isoleucine to tRNA(Ile). As IleRS can inadvertently accommodate and process structurally similar amino acids such as valine, to avoid such errors it has two additional distinct tRNA(Ile)-dependent editing activities. One activity is designated as 'pretransfer' editing and involves the hydrolysis of activated Val-AMP. The other activity is designated 'posttransfer' editing and involves deacylation of mischarged Val-tRNA(Ile). The chain is Isoleucine--tRNA ligase from Pasteurella multocida (strain Pm70).